The chain runs to 310 residues: Ribose-phosphate pyrophosphokinase (310 aa).

ATP is bound by residues 34-36 (DGE) and 93-94 (RQ). Mg(2+)-binding residues include H127 and D167. K190 is an active-site residue. D-ribose 5-phosphate-binding positions include R192, D216, and 220-224 (DSGGT).

It belongs to the ribose-phosphate pyrophosphokinase family. Class I subfamily. In terms of assembly, homohexamer. It depends on Mg(2+) as a cofactor.

It is found in the cytoplasm. It carries out the reaction D-ribose 5-phosphate + ATP = 5-phospho-alpha-D-ribose 1-diphosphate + AMP + H(+). It functions in the pathway metabolic intermediate biosynthesis; 5-phospho-alpha-D-ribose 1-diphosphate biosynthesis; 5-phospho-alpha-D-ribose 1-diphosphate from D-ribose 5-phosphate (route I): step 1/1. In terms of biological role, involved in the biosynthesis of the central metabolite phospho-alpha-D-ribosyl-1-pyrophosphate (PRPP) via the transfer of pyrophosphoryl group from ATP to 1-hydroxyl of ribose-5-phosphate (Rib-5-P). The sequence is that of Ribose-phosphate pyrophosphokinase from Maricaulis maris (strain MCS10) (Caulobacter maris).